The chain runs to 147 residues: uncharacterized protein (147 aa).

This is an uncharacterized protein from Homo sapiens (Human).